The chain runs to 478 residues: Proline--tRNA ligase (478 aa).

This sequence belongs to the class-II aminoacyl-tRNA synthetase family. ProS type 3 subfamily. As to quaternary structure, homodimer.

Its subcellular location is the cytoplasm. The enzyme catalyses tRNA(Pro) + L-proline + ATP = L-prolyl-tRNA(Pro) + AMP + diphosphate. In terms of biological role, catalyzes the attachment of proline to tRNA(Pro) in a two-step reaction: proline is first activated by ATP to form Pro-AMP and then transferred to the acceptor end of tRNA(Pro). The sequence is that of Proline--tRNA ligase from Ruminiclostridium cellulolyticum (strain ATCC 35319 / DSM 5812 / JCM 6584 / H10) (Clostridium cellulolyticum).